Here is a 349-residue protein sequence, read N- to C-terminus: Signal peptidase I (349 aa).

The next 2 helical transmembrane spans lie at 3 to 23 (NLFF…LDYF) and 25 to 45 (LPNT…VLWC). Residues 46–80 (YHRFVVLPKRHRQVARAEQRSGKTLSEEEKAKIEP) are Cytoplasmic-facing. A helical membrane pass occupies residues 81–101 (ISEASEFLSSLFPVLAVVFLV). Residues 102–349 (RSFLFEPFQI…RFERFFTAIK (248 aa)) lie on the Periplasmic side of the membrane. Catalysis depends on residues Ser-115 and Lys-196.

This sequence belongs to the peptidase S26 family.

It localises to the cell inner membrane. It carries out the reaction Cleavage of hydrophobic, N-terminal signal or leader sequences from secreted and periplasmic proteins.. This Haemophilus influenzae (strain ATCC 51907 / DSM 11121 / KW20 / Rd) protein is Signal peptidase I (lepB).